Here is an 829-residue protein sequence, read N- to C-terminus: GTPase-activating protein GYP5 (829 aa).

The interval 1–243 (MVEAGAKISK…VPPPLSEELK (243 aa)) is disordered. Positions 38-50 (AEHETQDSAKAQE) are enriched in basic and acidic residues. A compositionally biased stretch (low complexity) spans 101–115 (TAAAAGALPGIGRAR). 2 stretches are compositionally biased toward basic and acidic residues: residues 142 to 151 (KDAKISERAE) and 189 to 220 (KQAEGEQSRPEGEQGRPENKNKKAKDKHDDLP). Residues 279-341 (INRLRVNAQE…DEEEEEMRKI (63 aa)) adopt a coiled-coil conformation. Positions 371 to 550 (GIPKQIRGII…RILDVIFVEG (180 aa)) constitute a Rab-GAP TBC domain. Disordered stretches follow at residues 600-620 (GKEDTNAIQNAEVSDSSSKSS) and 790-812 (LKKNRANTSVEHGEDSSSEPRVR). Residues 666–803 (FQREAQYEEM…RANTSVEHGE (138 aa)) adopt a coiled-coil conformation. The segment covering 800–811 (EHGEDSSSEPRV) has biased composition (basic and acidic residues).

The protein belongs to the GYP5 family.

The protein localises to the cytoplasm. Functionally, GTPase-activating protein which accelerates the GTP hydrolysis rate of several GTPases. Involved in ER to Golgi trafficking and polarized exocytosis. This Eremothecium gossypii (strain ATCC 10895 / CBS 109.51 / FGSC 9923 / NRRL Y-1056) (Yeast) protein is GTPase-activating protein GYP5 (GYP5).